The sequence spans 146 residues: Large ribosomal subunit protein uL15 (146 aa).

Positions 1–62 (MRLHELRPKT…GQMPLQERLP (62 aa)) are disordered. The span at 10-21 (TNYKKSRKRKGR) shows a compositional bias: basic residues. Over residues 42-52 (TGGGVRPGFEG) the composition is skewed to gly residues.

The protein belongs to the universal ribosomal protein uL15 family. As to quaternary structure, part of the 50S ribosomal subunit.

Binds to the 23S rRNA. The polypeptide is Large ribosomal subunit protein uL15 (Natranaerobius thermophilus (strain ATCC BAA-1301 / DSM 18059 / JW/NM-WN-LF)).